The chain runs to 56 residues: Ovomucoid (56 aa).

Residues 6-56 enclose the Kazal-like domain; it reads VDCSDHPKPACLQEQKPLCGSDNKTYDNKCSFCNAVVDSNGTLTLSHFGKC. Disulfide bonds link Cys8–Cys38, Cys16–Cys35, and Cys24–Cys56. A glycan (N-linked (GlcNAc...) asparagine) is linked at Asn45.

Its subcellular location is the secreted. The chain is Ovomucoid from Pipile pipile (Trinidad piping guan).